Reading from the N-terminus, the 241-residue chain is Small ribosomal subunit protein uS3 (241 aa).

Residues 39 to 109 form the KH type-2 domain; the sequence is VRNYVNKNLS…PIRINVVEVA (71 aa). The tract at residues 213–241 is disordered; the sequence is ADEQPTNREPQQRRRQQQRRRQQFEDRSE.

The protein belongs to the universal ribosomal protein uS3 family. As to quaternary structure, part of the 30S ribosomal subunit. Forms a tight complex with proteins S10 and S14.

Functionally, binds the lower part of the 30S subunit head. Binds mRNA in the 70S ribosome, positioning it for translation. The sequence is that of Small ribosomal subunit protein uS3 from Acaryochloris marina (strain MBIC 11017).